The chain runs to 319 residues: MFRFDKEQMVIEFAGAKFGGQPGEYPTALSGTIFYSRHKIVEDAKKGIFDKKAAEALINKQAEMQDITGNSAFVQVFGGTEEALVNYIDFVSEVWDGPMLLDSTSGKARMAAANRATEAGYANQCIYNSINVAAEDEEIENLTNSDVEASIVLCFDPMDPSVAGKLNVLNDGGKTKDIGMLELAEKAGIKYPLIDVAVTPMGNGAGHAVRAAFAVKAKLGLPVGSGIHNVPSAWDWLREFRKGLREEGKDQIAKDVHHVCDIGANIVQTMTSGDYVLYGPIDNAELAFPAVAMTDMIIAETAKEMGTVPVAEHPLNKLI.

The protein belongs to the MtrH family. In terms of assembly, the complex is composed of 8 subunits; MtrA, MtrB, MtrC, MtrD, MtrE, MtrF, MtrG and MtrH.

It catalyses the reaction 5-methyl-5,6,7,8-tetrahydromethanopterin + coenzyme M + 2 Na(+)(in) = 5,6,7,8-tetrahydromethanopterin + methyl-coenzyme M + 2 Na(+)(out). It participates in one-carbon metabolism; methanogenesis from CO(2); methyl-coenzyme M from 5,10-methylene-5,6,7,8-tetrahydromethanopterin: step 2/2. In terms of biological role, part of a complex that catalyzes the formation of methyl-coenzyme M and tetrahydromethanopterin from coenzyme M and methyl-tetrahydromethanopterin. This is an energy-conserving, sodium-ion translocating step. MtrH catalyzes the transfer of the methyl group from methyl-tetrahydromethanopterin to the corrinoid prosthetic group of MtrA. The sequence is that of Tetrahydromethanopterin S-methyltransferase subunit H from Methanococcus maripaludis (strain DSM 14266 / JCM 13030 / NBRC 101832 / S2 / LL).